The primary structure comprises 205 residues: Cytochrome c biogenesis ATP-binding export protein CcmA (205 aa).

An ABC transporter domain is found at 2 to 204 (LEVSNLTAIR…SPKLRKIKLG (203 aa)). 34 to 41 (GRNGTGKT) serves as a coordination point for ATP.

Belongs to the ABC transporter superfamily. CcmA exporter (TC 3.A.1.107) family. As to quaternary structure, the complex is composed of two ATP-binding proteins (CcmA) and two transmembrane proteins (CcmB).

The protein localises to the cell inner membrane. The enzyme catalyses heme b(in) + ATP + H2O = heme b(out) + ADP + phosphate + H(+). In terms of biological role, part of the ABC transporter complex CcmAB involved in the biogenesis of c-type cytochromes; once thought to export heme, this seems not to be the case, but its exact role is uncertain. Responsible for energy coupling to the transport system. This chain is Cytochrome c biogenesis ATP-binding export protein CcmA, found in Vibrio vulnificus (strain CMCP6).